The primary structure comprises 377 residues: Glutamate 5-kinase (377 aa).

Lys-20 lines the ATP pocket. 3 residues coordinate substrate: Ser-60, Asp-147, and Asn-159. 179–180 lines the ATP pocket; it reads TD. Positions 285–363 constitute a PUA domain; sequence AGRLVIDAGA…DKVHQVLGEA (79 aa).

It belongs to the glutamate 5-kinase family.

It is found in the cytoplasm. It catalyses the reaction L-glutamate + ATP = L-glutamyl 5-phosphate + ADP. It participates in amino-acid biosynthesis; L-proline biosynthesis; L-glutamate 5-semialdehyde from L-glutamate: step 1/2. Catalyzes the transfer of a phosphate group to glutamate to form L-glutamate 5-phosphate. The sequence is that of Glutamate 5-kinase from Acinetobacter baylyi (strain ATCC 33305 / BD413 / ADP1).